The following is a 212-amino-acid chain: Large ribosomal subunit protein uL4 (212 aa).

Over residues 43-52 the composition is skewed to polar residues; it reads NNRQGTASTK. The segment at 43 to 77 is disordered; that stretch reads NNRQGTASTKTRSEVRGGGRKPWRQKGTGRARAGS. Residues 60–71 show a composition bias toward basic residues; it reads GGRKPWRQKGTG.

It belongs to the universal ribosomal protein uL4 family. In terms of assembly, part of the 50S ribosomal subunit.

Functionally, one of the primary rRNA binding proteins, this protein initially binds near the 5'-end of the 23S rRNA. It is important during the early stages of 50S assembly. It makes multiple contacts with different domains of the 23S rRNA in the assembled 50S subunit and ribosome. Forms part of the polypeptide exit tunnel. This Trichodesmium erythraeum (strain IMS101) protein is Large ribosomal subunit protein uL4.